Reading from the N-terminus, the 245-residue chain is Ribosomal RNA small subunit methyltransferase G (245 aa).

Residues Gly79, Phe84, 130–131 (AE), and Arg150 each bind S-adenosyl-L-methionine.

This sequence belongs to the methyltransferase superfamily. RNA methyltransferase RsmG family.

It localises to the cytoplasm. In terms of biological role, specifically methylates the N7 position of a guanine in 16S rRNA. This Limosilactobacillus fermentum (strain NBRC 3956 / LMG 18251) (Lactobacillus fermentum) protein is Ribosomal RNA small subunit methyltransferase G.